The primary structure comprises 483 residues: Regulatory protein ViaA (483 aa).

This sequence belongs to the ViaA family. In terms of assembly, homodimer. Interacts with RavA.

It localises to the cytoplasm. Component of the RavA-ViaA chaperone complex, which may act on the membrane to optimize the function of some of the respiratory chains. ViaA stimulates the ATPase activity of RavA. In Escherichia coli O127:H6 (strain E2348/69 / EPEC), this protein is Regulatory protein ViaA.